A 204-amino-acid chain; its full sequence is RNA-free ribonuclease P (204 aa).

Belongs to the HARP family.

The catalysed reaction is Endonucleolytic cleavage of RNA, removing 5'-extranucleotides from tRNA precursor.. Its function is as follows. RNA-free RNase P that catalyzes the removal of the 5'-leader sequence from pre-tRNA to produce the mature 5'-terminus. The protein is RNA-free ribonuclease P of Pyrococcus abyssi (strain GE5 / Orsay).